Reading from the N-terminus, the 29-residue chain is Brevinin-2Ee (29 aa).

Cys-23 and Cys-29 are disulfide-bonded.

The protein belongs to the frog skin active peptide (FSAP) family. Brevinin subfamily. In terms of tissue distribution, expressed by the skin glands.

It is found in the secreted. Its function is as follows. Shows antibacterial activity against representative Gram-negative and Gram-positive bacterial species, and hemolytic activity. This is Brevinin-2Ee from Pelophylax lessonae (Pool frog).